The primary structure comprises 417 residues: Tol-Pal system protein TolB (417 aa).

The first 16 residues, 1-16 (MKYLWLFLIYAIGLFA), serve as a signal peptide directing secretion.

It belongs to the TolB family. The Tol-Pal system is composed of five core proteins: the inner membrane proteins TolA, TolQ and TolR, the periplasmic protein TolB and the outer membrane protein Pal. They form a network linking the inner and outer membranes and the peptidoglycan layer.

The protein resides in the periplasm. Part of the Tol-Pal system, which plays a role in outer membrane invagination during cell division and is important for maintaining outer membrane integrity. The chain is Tol-Pal system protein TolB from Helicobacter pylori (strain J99 / ATCC 700824) (Campylobacter pylori J99).